A 246-amino-acid chain; its full sequence is UDP-N-acetyl-D-mannosaminuronic acid transferase (246 aa).

Belongs to the glycosyltransferase 26 family.

The catalysed reaction is UDP-N-acetyl-alpha-D-mannosaminouronate + N-acetyl-alpha-D-glucosaminyl-di-trans,octa-cis-undecaprenyl diphosphate = beta-D-ManNAcA-(1-&gt;4)-alpha-D-GlcNAc-di-trans,octa-cis-undecaprenyl diphosphate + UDP + H(+). It functions in the pathway bacterial outer membrane biogenesis; enterobacterial common antigen biosynthesis. In terms of biological role, catalyzes the synthesis of Und-PP-GlcNAc-ManNAcA (Lipid II), the second lipid-linked intermediate involved in enterobacterial common antigen (ECA) synthesis. The sequence is that of UDP-N-acetyl-D-mannosaminuronic acid transferase from Escherichia coli (strain 55989 / EAEC).